Here is a 911-residue protein sequence, read N- to C-terminus: Protein SOSEKI (911 aa).

The tract at residues 15-107 is DIX-like oligomerization domain; it reads TKVQVVYYLS…LVLKGSELYT (93 aa). 2 disordered regions span residues 219–470 and 492–810; these read SETL…TQCE and LCGN…PPRI. Basic and acidic residues-rich tracts occupy residues 253-286 and 295-407; these read TDRE…EVSR and EAPR…EELP. Over residues 414-423 the composition is skewed to polar residues; the sequence is SPTCSESGDS. Over residues 452 to 467 the composition is skewed to low complexity; the sequence is SSSTRSSTPSTSAAST. The Association to cell membranes motif lies at 493–494; sequence CG. The span at 511-527 shows a compositional bias: low complexity; sequence PLAAAAQPASGAVPQSP. Over residues 591–607 the composition is skewed to polar residues; that stretch reads SGVNSAMATPFLQTENN. The span at 608 to 662 shows a compositional bias: low complexity; it reads SPSSSESSSAAVSSGKKPASISLSGTSDASDGGNGASSTASSSSEVQNNVSVKEV. Polar residues predominate over residues 663 to 683; it reads ITQQLPSPSSSEGRPSLNIDT. Residues 696–709 show a composition bias toward basic and acidic residues; that stretch reads SDVRETVKTTRPDS. Positions 722-733 are enriched in polar residues; sequence PVRTQLSSSPSF. The span at 735 to 771 shows a compositional bias: basic and acidic residues; the sequence is KRIEDARARARSLVSKEIRSGESRSSKDLLKENDRVK. Positions 772-784 are enriched in low complexity; the sequence is TSSGSMRSGSTRT. Over residues 785-805 the composition is skewed to polar residues; it reads PNNKNGTTGAGSKTLSGTFNR. A C2HC/C3H-type zinc finger spans residues 864 to 893; sequence ILQECGQCGRTFKPDSLKVHMRGCHALRRS. The Zn(2+) site is built by C868, C871, H883, and C887.

This sequence belongs to the SOSEKI family. In terms of assembly, homodimer. Forms long polymer filaments with other SOKs proteins polymers crucial for polar localization and biological activity. Requires Zn(2+) as cofactor.

Its subcellular location is the cell membrane. Its function is as follows. SOSEKI proteins locally interpret global polarity cues and can influence cell division orientation to coordinate cell polarization relative to body axes. The protein is Protein SOSEKI of Marchantia polymorpha (Common liverwort).